Here is a 457-residue protein sequence, read N- to C-terminus: Glycine receptor subunit alpha-1 (457 aa).

Positions 1–28 are cleaved as a signal peptide; the sequence is MYSFNTLRLYLWETIVFFSLAASKEAEA. The Extracellular portion of the chain corresponds to 29-250; sequence ARSAPKPMSP…RFHLERQMGY (222 aa). The N-linked (GlcNAc...) asparagine glycan is linked to N66. Glycine-binding residues include R93 and S157. C166 and C180 are disulfide-bonded. Zn(2+) contacts are provided by E220 and D222. C226 and C237 are disulfide-bonded. A strychnine-binding site is contributed by 230–235; sequence YNTGKF. A glycine-binding site is contributed by T232. Residue H243 participates in Zn(2+) binding. A helical transmembrane segment spans residues 251–272; the sequence is YLIQMYIPSLLIVILSWISFWI. At 273–277 the chain is on the cytoplasmic side; it reads NMDAA. The helical transmembrane segment at 278–298 threads the bilayer; that stretch reads PARVGLGITTVLTMTTQSSGS. At 299-309 the chain is on the extracellular side; that stretch reads RASLPKVSYVK. The helical transmembrane segment at 310–330 threads the bilayer; sequence AIDIWMAVCLLFVFSALLEYA. The Cytoplasmic portion of the chain corresponds to 331-425; the sequence is AVNFVSRQHK…FIQRAKKIDK (95 aa). The interval 391-410 is disordered; the sequence is KGANNSNTTNPPPAPSKSPE. A helical transmembrane segment spans residues 426 to 446; the sequence is ISRIGFPMAFLIFNMFYWIIY. Topologically, residues 447–457 are extracellular; that stretch reads KIVRREDVHNQ.

It belongs to the ligand-gated ion channel (TC 1.A.9) family. Glycine receptor (TC 1.A.9.3) subfamily. GLRA1 sub-subfamily. Interacts with GLRB to form heteropentameric channels; this is probably the predominant form in vivo. Heteropentamer composed of four GLRA1 subunits and one GLRB subunit. Heteropentamer composed of two GLRA1 and three GLRB. Heteropentamer composed of three GLRA1 and two GLRB. Homopentamer (in vitro). Both homopentamers and heteropentamers form functional ion channels, but their characteristics are subtly different.

The protein localises to the postsynaptic cell membrane. It localises to the synapse. It is found in the perikaryon. Its subcellular location is the cell projection. The protein resides in the dendrite. The protein localises to the cell membrane. It catalyses the reaction chloride(in) = chloride(out). Its activity is regulated as follows. Channel opening is triggered by extracellular glycine. Channel characteristics depend on the subunit composition; heteropentameric channels are activated by lower glycine levels and display faster desensitization. Channel opening is also triggered by taurine and beta-alanine. Channel activity is potentiated by nanomolar concentrations of Zn(2+); half-maximal activation is observed with 37 nM Zn(2+). Inhibited by higher Zn(2+) levels; haf-maximal inhibition occurs at 20 uM Zn(2+). Inhibited by strychnine. Strychnine binding locks the channel in a closed conformation and prevents channel opening in response to extracellular glycine. Inhibited by lindane. Inhibited by picrotoxin. Functionally, subunit of heteromeric glycine-gated chloride channels. Plays an important role in the down-regulation of neuronal excitability. Contributes to the generation of inhibitory postsynaptic currents. Channel activity is potentiated by ethanol. Potentiation of channel activity by intoxicating levels of ethanol contribute to the sedative effects of ethanol. In Homo sapiens (Human), this protein is Glycine receptor subunit alpha-1 (GLRA1).